The sequence spans 206 residues: Large ribosomal subunit protein uL22m (206 aa).

The transit peptide at 1-40 directs the protein to the mitochondrion; sequence MAAAVLGQLGALWIHNLRSRGRLAWGVLPQSYVHTSASLD.

The protein belongs to the universal ribosomal protein uL22 family. In terms of assembly, component of the mitochondrial ribosome large subunit (39S) which comprises a 16S rRNA and about 50 distinct proteins.

It is found in the mitochondrion. The chain is Large ribosomal subunit protein uL22m (MRPL22) from Pongo abelii (Sumatran orangutan).